A 525-amino-acid chain; its full sequence is GMP synthase [glutamine-hydrolyzing] (525 aa).

A Glutamine amidotransferase type-1 domain is found at 9-207 (RILILDFGSQ…VLTISGCEAL (199 aa)). Residue Cys-86 is the Nucleophile of the active site. Residues His-181 and Glu-183 contribute to the active site. Residues 208-400 (WTPAKIVDDA…LGLPYDMVYR (193 aa)) enclose the GMPS ATP-PPase domain. ATP is bound at residue 235–241 (SGGVDSS).

In terms of assembly, homodimer.

It catalyses the reaction XMP + L-glutamine + ATP + H2O = GMP + L-glutamate + AMP + diphosphate + 2 H(+). It functions in the pathway purine metabolism; GMP biosynthesis; GMP from XMP (L-Gln route): step 1/1. Its function is as follows. Catalyzes the synthesis of GMP from XMP. In Marinobacter nauticus (strain ATCC 700491 / DSM 11845 / VT8) (Marinobacter aquaeolei), this protein is GMP synthase [glutamine-hydrolyzing].